Consider the following 29-residue polypeptide: Serum amyloid P-component (29 aa).

In terms of domain architecture, Pentraxin (PTX) spans Leu-6–Glu-29.

This sequence belongs to the pentraxin family. As to quaternary structure, homopentamer. Pentraxin (or pentaxin) have a discoid arrangement of 5 non-covalently bound subunits. It depends on Ca(2+) as a cofactor.

Its subcellular location is the secreted. The protein is Serum amyloid P-component of Hippoglossus hippoglossus (Atlantic halibut).